Reading from the N-terminus, the 131-residue chain is Small ribosomal subunit protein uS8 (131 aa).

Belongs to the universal ribosomal protein uS8 family. Part of the 30S ribosomal subunit. Contacts proteins S5 and S12.

Functionally, one of the primary rRNA binding proteins, it binds directly to 16S rRNA central domain where it helps coordinate assembly of the platform of the 30S subunit. The protein is Small ribosomal subunit protein uS8 of Chlorobaculum tepidum (strain ATCC 49652 / DSM 12025 / NBRC 103806 / TLS) (Chlorobium tepidum).